The sequence spans 638 residues: NBPF family member NBPF6 (638 aa).

Coiled coils occupy residues 10-43 and 69-115; these read SERA…EKFL and DSVL…KLRE. Residues 157–285 are disordered; it reads HLVHKLSPEN…VPPRHHDKSN (129 aa). Residues 165 to 179 are compositionally biased toward acidic residues; the sequence is ENDEDEDEDEDDKDE. The region spanning 174-261 is the Olduvai 1 domain; the sequence is EDDKDEEVEK…EEEEALNIPP (88 aa). Over residues 192-202 the composition is skewed to basic and acidic residues; that stretch reads EVQKTEEKEVP. The span at 214–226 shows a compositional bias: low complexity; it reads SNSHNPSNSNQPH. Basic and acidic residues-rich tracts occupy residues 232 to 251 and 264 to 273; these read TFKE…HPHD and QNDHEEEEGK. Olduvai domains are found at residues 326 to 399 and 400 to 503; these read EKQS…ALVD and KIKK…SQAQ. Residues 563-584 form a disordered region; that stretch reads MKNPPQLEDDALEGSASNTQGR.

Belongs to the NBPF family.

The protein localises to the cytoplasm. The sequence is that of NBPF family member NBPF6 from Homo sapiens (Human).